The following is a 534-amino-acid chain: Cytokinin dehydrogenase 5 (534 aa).

A signal peptide spans 1 to 20 (MAWCLVFMVFLIYCLISTVG). An FAD-binding PCMH-type domain is found at 59 to 243 (TSAEPLAVFH…TRARIALEPA (185 aa)). FAD contacts are provided by A93, G95, and G97. H98 carries the post-translational modification Pros-8alpha-FAD histidine. Residues S99 and Q103 each contribute to the FAD site. N-linked (GlcNAc...) asparagine glycosylation is present at N152. FAD-binding residues include D167, S172, S178, I182, and I233. N256 carries an N-linked (GlcNAc...) asparagine glycan. FAD-binding residues include Y484 and Q522.

This sequence belongs to the oxygen-dependent FAD-linked oxidoreductase family. In terms of assembly, monomer. It depends on FAD as a cofactor. In terms of tissue distribution, expressed in inflorescence meristems.

It is found in the secreted. The protein localises to the extracellular space. The catalysed reaction is N(6)-dimethylallyladenine + A + H2O = 3-methyl-2-butenal + adenine + AH2. Catalyzes the oxidation of cytokinins, a family of N(6)-substituted adenine derivatives that are plant hormones, where the substituent is an isopentenyl group. The sequence is that of Cytokinin dehydrogenase 5 (CKX5) from Oryza sativa subsp. japonica (Rice).